Here is a 164-residue protein sequence, read N- to C-terminus: PTS system sorbose-specific EIIB component (164 aa).

Positions 1–164 (MQITLARIDD…DKINETAFCE (164 aa)) constitute a PTS EIIB type-4 domain. His-14 serves as the catalytic Pros-phosphohistidine intermediate. Position 14 is a phosphohistidine; by EIIA (His-14).

Dimer of dimers.

The protein localises to the cytoplasm. It catalyses the reaction keto-L-sorbose(out) + N(pros)-phospho-L-histidyl-[protein] = L-sorbose 1-phosphate(in) + L-histidyl-[protein]. Its function is as follows. The phosphoenolpyruvate-dependent sugar phosphotransferase system (PTS), a major carbohydrate active transport system, catalyzes the phosphorylation of incoming sugar substrates concomitant with their translocation across the cell membrane. The enzyme II SorABFM PTS system is involved in L-sorbose transport. In Klebsiella pneumoniae, this protein is PTS system sorbose-specific EIIB component.